Here is a 65-residue protein sequence, read N- to C-terminus: MPKMKTHRGAAKRFKKTGTGKIKRGQSKMRHILTSKETKTKRKLTASAYVSDADHAKVARMIPYA.

The interval 1-28 (MPKMKTHRGAAKRFKKTGTGKIKRGQSK) is disordered.

The protein belongs to the bacterial ribosomal protein bL35 family.

This chain is Large ribosomal subunit protein bL35, found in Acidobacterium capsulatum (strain ATCC 51196 / DSM 11244 / BCRC 80197 / JCM 7670 / NBRC 15755 / NCIMB 13165 / 161).